Consider the following 1442-residue polypeptide: Clustered mitochondria protein homolog (1442 aa).

Disordered stretches follow at residues 38-100 (NYRN…KKPD) and 237-258 (GRSESVDCTPPEHIMPGAKDRP). The segment covering 82 to 100 (SEGEQQKDKTAAEDKKKPD) has biased composition (basic and acidic residues). The Clu domain maps to 394–636 (RAEDTFSSKL…RTFPPDVNFL (243 aa)). Basic and acidic residues-rich tracts occupy residues 696 to 714 (QKQEAKDSKDSEKKEEPKA) and 737 to 763 (ESKEECPKKGSTDKAKDKSAGVPKVET). Disordered regions lie at residues 696–763 (QKQE…KVET) and 949–984 (SESDALTKSGSSGGKQQRRQNKRSAGSKGGKPSFQC). Over residues 949-958 (SESDALTKSG) the composition is skewed to polar residues. TPR repeat units lie at residues 1087-1120 (AYNFYTTGQSKIQQGYFKDGYDLISEALNLLNNV), 1213-1246 (ALLDSNISLILHAVGEYELSLRFLEHALALNIKY), and 1248-1281 (GEKSLKVAVSYHLVARTQSCMGDFRSALNNEKET). Residues 1373–1442 (RQKEGGTSEQ…SSNASAQQVS (70 aa)) form a disordered region. A compositionally biased stretch (low complexity) spans 1380-1390 (SEQAAAAQASQ). Positions 1424–1442 (ASSSKQADNSSNASAQQVS) are enriched in polar residues.

It belongs to the CLU family.

Its subcellular location is the cytoplasm. Its function is as follows. mRNA-binding protein involved in proper cytoplasmic distribution of mitochondria. The sequence is that of Clustered mitochondria protein homolog from Aedes aegypti (Yellowfever mosquito).